A 528-amino-acid polypeptide reads, in one-letter code: Glutamyl-tRNA(Gln) amidotransferase subunit A, mitochondrial (528 aa).

Lys-76 acts as the Charge relay system in catalysis. The disordered stretch occupies residues 148–167 (YREKRKQNPHSENEDSDWLI). The Charge relay system role is filled by Ser-171. Ser-195 serves as the catalytic Acyl-ester intermediate.

The protein belongs to the amidase family. GatA subfamily. As to quaternary structure, subunit of the heterotrimeric GatCAB amidotransferase (AdT) complex, composed of A (QRSL1), B (GATB) and C (GATC) subunits.

The protein resides in the mitochondrion. The catalysed reaction is L-glutamyl-tRNA(Gln) + L-glutamine + ATP + H2O = L-glutaminyl-tRNA(Gln) + L-glutamate + ADP + phosphate + H(+). In terms of biological role, allows the formation of correctly charged Gln-tRNA(Gln) through the transamidation of misacylated Glu-tRNA(Gln) in the mitochondria. The reaction takes place in the presence of glutamine and ATP through an activated gamma-phospho-Glu-tRNA(Gln). In Homo sapiens (Human), this protein is Glutamyl-tRNA(Gln) amidotransferase subunit A, mitochondrial.